The sequence spans 171 residues: Peptide methionine sulfoxide reductase MsrA (171 aa).

Residue C13 is part of the active site.

It belongs to the MsrA Met sulfoxide reductase family.

The catalysed reaction is L-methionyl-[protein] + [thioredoxin]-disulfide + H2O = L-methionyl-(S)-S-oxide-[protein] + [thioredoxin]-dithiol. It catalyses the reaction [thioredoxin]-disulfide + L-methionine + H2O = L-methionine (S)-S-oxide + [thioredoxin]-dithiol. Functionally, has an important function as a repair enzyme for proteins that have been inactivated by oxidation. Catalyzes the reversible oxidation-reduction of methionine sulfoxide in proteins to methionine. This chain is Peptide methionine sulfoxide reductase MsrA, found in Mycolicibacterium paratuberculosis (strain ATCC BAA-968 / K-10) (Mycobacterium paratuberculosis).